Here is a 711-residue protein sequence, read N- to C-terminus: 1,4-alpha-glucan branching enzyme GlgB (711 aa).

Aspartate 392 functions as the Nucleophile in the catalytic mechanism. The Proton donor role is filled by glutamate 443.

This sequence belongs to the glycosyl hydrolase 13 family. GlgB subfamily. As to quaternary structure, monomer.

The enzyme catalyses Transfers a segment of a (1-&gt;4)-alpha-D-glucan chain to a primary hydroxy group in a similar glucan chain.. It functions in the pathway glycan biosynthesis; glycogen biosynthesis. In terms of biological role, catalyzes the formation of the alpha-1,6-glucosidic linkages in glycogen by scission of a 1,4-alpha-linked oligosaccharide from growing alpha-1,4-glucan chains and the subsequent attachment of the oligosaccharide to the alpha-1,6 position. The sequence is that of 1,4-alpha-glucan branching enzyme GlgB from Corynebacterium jeikeium (strain K411).